The following is a 116-amino-acid chain: Dynein light chain Tctex-type 3 (116 aa).

Residue Y4 is modified to 3'-nitrotyrosine.

It belongs to the dynein light chain Tctex-type family. In terms of assembly, homodimer. The cytoplasmic dynein 1 complex consists of two catalytic heavy chains (HCs) and a number of non-catalytic subunits presented by intermediate chains (ICs), light intermediate chains (LICs) and light chains (LCs); the composition seems to vary in respect to the IC, LIC and LC composition. The heavy chain homodimer serves as a scaffold for the probable homodimeric assembly of the respective non-catalytic subunits. The ICs and LICs bind directly to the HC dimer and the LCs assemble on the IC dimer. DYNLT1 and DYNLT3 compete for association with dynein IC (DYNC1I1 or DYNC1I2). Self-associates. Interacts with DYNC1I1 and DYNC1I2. Interacts with BUB3. Interacts with SATB1 in nucleus to form complex with matrix attachment regions (MARs) of DNA.

It is found in the nucleus. It localises to the cytoplasm. Its subcellular location is the cytoskeleton. The protein localises to the chromosome. The protein resides in the centromere. It is found in the kinetochore. Its function is as follows. Acts as one of several non-catalytic accessory components of the cytoplasmic dynein 1 complex that are thought to be involved in linking dynein to cargos and to adapter proteins that regulate dynein function. Cytoplasmic dynein 1 acts as a motor for the intracellular retrograde motility of vesicles and organelles along microtubules. Probably binds BUB3 as part of transport cargo. Required for the efficient progression through mitosis. The protein is Dynein light chain Tctex-type 3 (DYNLT3) of Canis lupus familiaris (Dog).